The following is a 395-amino-acid chain: LL-diaminopimelate aminotransferase (395 aa).

Tyr14 and Gly41 together coordinate substrate. Pyridoxal 5'-phosphate contacts are provided by residues Tyr71, 104–105 (AK), Tyr128, Asn174, Tyr205, and 233–235 (SFS). Substrate-binding residues include Lys105, Tyr128, and Asn174. Position 236 is an N6-(pyridoxal phosphate)lysine (Lys236). 2 residues coordinate pyridoxal 5'-phosphate: Arg244 and Asn275. Positions 275 and 368 each coordinate substrate.

The protein belongs to the class-I pyridoxal-phosphate-dependent aminotransferase family. LL-diaminopimelate aminotransferase subfamily. In terms of assembly, homodimer. Pyridoxal 5'-phosphate serves as cofactor.

The enzyme catalyses (2S,6S)-2,6-diaminopimelate + 2-oxoglutarate = (S)-2,3,4,5-tetrahydrodipicolinate + L-glutamate + H2O + H(+). The protein operates within amino-acid biosynthesis; L-lysine biosynthesis via DAP pathway; LL-2,6-diaminopimelate from (S)-tetrahydrodipicolinate (aminotransferase route): step 1/1. Its function is as follows. Involved in the synthesis of meso-diaminopimelate (m-DAP or DL-DAP), required for both lysine and peptidoglycan biosynthesis. Catalyzes the direct conversion of tetrahydrodipicolinate to LL-diaminopimelate. This is LL-diaminopimelate aminotransferase from Chlamydia caviae (strain ATCC VR-813 / DSM 19441 / 03DC25 / GPIC) (Chlamydophila caviae).